The following is a 144-amino-acid chain: Bombinins BLP-7/GH-2 (144 aa).

Residues 1-18 form the signal peptide; it reads MNFKYIVAVSFLIASTYA. A propeptide spanning residues 19 to 43 is cleaved from the precursor; it reads RSVKNDEQSLSQRDVLEEESLREIR. Asn70 is subject to Asparagine amide. Residues 74-123 constitute a propeptide that is removed on maturation; the sequence is TAEEHEVMKRLEAVMRDLDSLDYPEEASEMETRSFNQEEIANLFTKKEKR. Ile143 carries the post-translational modification Isoleucine amide.

Belongs to the bombinin family. Expressed by the skin glands.

The protein localises to the secreted. Antimicrobial peptide with activity against Gram-positive and -negative bacteria and fungi. Shows activity against P.acnes (MIC=5 uM), E.coli (MIC=5-6.3 uM), S.aureus (MIC=5-6.3 uM), M.luteus, S.cerevisiae and C.albicans (MIC=10-12.5 uM). Also reduces the production of interleukin (IL)-8 and granulocyte-macrophage colony stimulating factor (CSF2) in normal human epidermal keratinocytes (NHEKs). Shows anticancer activity against three human hepatoma cell lines. In vivo, using the rat ear edema model, suppress P.acnes-induced skin inflammation, significantly reducing the ear thickness. Shows weak hemolytic activity against human erythrocytes. Its function is as follows. Shows weak antimicrobial activity but high hemolytic activity. This is Bombinins BLP-7/GH-2 from Bombina orientalis (Oriental fire-bellied toad).